A 406-amino-acid chain; its full sequence is MADVKKVVLAYSGGLDTSVILKWLQDTYNCEVVTFTADLGQGEEVEPARAKAQALGVKEIFIDDLREEFVRDFVFPMFRANTVYEGEYLLGTSIARPLIAKRLIEIANATGADAISHGATGKGNDQVRFELGAYALKPGVKVIAPWREWDLLSREKLMDYAEKHGIPIERHGKKKSPYSMDANLLHISYEGGVLEDTWTEHEEDMWRWTKSPEAAPDVPTYVELTYRGGDIVAIDGVERTPAQVLGELNRMGGENGIGRLDIVENRYVGMKSRGCYETPGGTIMLKARRAIESITLDREVAHLKDELMPRYASLIYNGYWWSPERLMLQQMIDASQTSVNGVVRLKLYKGNVIVVGRKSDDSLFDASIATFEEDGGAYNQADAAGFIKLNALRMRIAASKGRNTLK.

ATP-binding positions include 10 to 18 (AYSGGLDTS) and A37. L-citrulline is bound by residues Y88 and S93. G118 is an ATP binding site. Positions 120, 124, and 125 each coordinate L-aspartate. Residue N124 participates in L-citrulline binding. 5 residues coordinate L-citrulline: R128, S179, S188, E264, and Y276.

Belongs to the argininosuccinate synthase family. Type 1 subfamily. Homotetramer.

It is found in the cytoplasm. It catalyses the reaction L-citrulline + L-aspartate + ATP = 2-(N(omega)-L-arginino)succinate + AMP + diphosphate + H(+). It participates in amino-acid biosynthesis; L-arginine biosynthesis; L-arginine from L-ornithine and carbamoyl phosphate: step 2/3. This Azotobacter vinelandii (strain DJ / ATCC BAA-1303) protein is Argininosuccinate synthase.